Reading from the N-terminus, the 763-residue chain is Phosphoglycerol transferase I (763 aa).

Transmembrane regions (helical) follow at residues 1-21, 26-46, 77-97, and 108-128; these read MSELLSVALFLASVLIYAWKA, WWFAATLTVLGLFVILNITLY, ILPGIGIALALVAVFGALGWV, and VGYSLLALLLALGSVDASPAF.

Belongs to the OpgB family.

The protein localises to the cell inner membrane. The enzyme catalyses a phosphatidylglycerol + a membrane-derived-oligosaccharide D-glucose = a 1,2-diacyl-sn-glycerol + a membrane-derived-oligosaccharide 6-(glycerophospho)-D-glucose.. Its pathway is glycan metabolism; osmoregulated periplasmic glucan (OPG) biosynthesis. Transfers a phosphoglycerol residue from phosphatidylglycerol to the membrane-bound nascent glucan backbones. The polypeptide is Phosphoglycerol transferase I (Salmonella dublin (strain CT_02021853)).